The chain runs to 302 residues: Formylmethanofuran--tetrahydromethanopterin formyltransferase (302 aa).

It belongs to the FTR family. As to quaternary structure, homotetramer.

Its subcellular location is the cytoplasm. It catalyses the reaction N-formylmethanofuran + 5,6,7,8-tetrahydromethanopterin + H(+) = N(5)-formyl-5,6,7,8-tetrahydromethanopterin + methanofuran. The protein operates within one-carbon metabolism; formaldehyde degradation; formate from formaldehyde (H(4)MPT route): step 4/5. Catalyzes the transfer of a formyl group from 5-formyl tetrahydromethanopterin (5-formyl-H(4)MPT) to methanofuran (MFR) to produce formylmethanofuran (formyl-MFR) and tetrahydromethanopterin (H(4)MPT). The protein is Formylmethanofuran--tetrahydromethanopterin formyltransferase of Methylobacillus flagellatus (strain ATCC 51484 / DSM 6875 / VKM B-1610 / KT).